We begin with the raw amino-acid sequence, 510 residues long: NAD(P)H-quinone oxidoreductase subunit 2 B, chloroplastic (510 aa).

The next 13 helical transmembrane spans lie at 24 to 44 (LLFFDGSLIFPECILIFGLIL), 57 to 77 (IPWLYFISSTSLVMSITALLF), 99 to 119 (IFQFLILLCSTLCIPLSVEYI), 124 to 144 (MAITEFLLFVLTATIGGMFLC), 149 to 169 (LITIFVAPECFSLCSYLLSGY), 183 to 203 (YLLMGGASSSILVHGFSWLYG), 227 to 247 (PGISIALIFITVGIGFKLSPA), 295 to 315 (WHLLLEILAILSMILGNLIAI), 323 to 343 (MLAYSSIGQIGYVIIGIIVGD), 354 to 374 (YMLFYISMNLGTFACIVLFGL), 395 to 415 (ALSLALCLLSLGGLPPLAGFF), 418 to 438 (LYLFWCGWQAGLYFLVLIGLL), and 484 to 504 (MIVCVIASTIPGISMNPIIAI).

The protein belongs to the complex I subunit 2 family. In terms of assembly, NDH is composed of at least 16 different subunits, 5 of which are encoded in the nucleus.

Its subcellular location is the plastid. The protein resides in the chloroplast thylakoid membrane. It catalyses the reaction a plastoquinone + NADH + (n+1) H(+)(in) = a plastoquinol + NAD(+) + n H(+)(out). The enzyme catalyses a plastoquinone + NADPH + (n+1) H(+)(in) = a plastoquinol + NADP(+) + n H(+)(out). NDH shuttles electrons from NAD(P)H:plastoquinone, via FMN and iron-sulfur (Fe-S) centers, to quinones in the photosynthetic chain and possibly in a chloroplast respiratory chain. The immediate electron acceptor for the enzyme in this species is believed to be plastoquinone. Couples the redox reaction to proton translocation, and thus conserves the redox energy in a proton gradient. This is NAD(P)H-quinone oxidoreductase subunit 2 B, chloroplastic from Guizotia abyssinica (Niger).